The following is a 484-amino-acid chain: MSSPLASLSKTRKVPLESESVNPGRRGIRVYGNEDEVDMWNDGQDSEEKISLPSCYGGIGAPVSRQGPHDSELMASMTRKLQELEQQLQAQNDEMLSKERKILDLEDLVQTLQQHQNNAALQRQEELETQCIQLQRQIGEMERFLSDYGLQWVGEPMDQENSEEKTVSENDERDWMKAKKFWKPGDSFVPPEVDFDKLMASLQDLSELVEGEAQVTPVPGGARFRTLEPIPLKVYRNGIMMFDGPFRPFYDPSTQRCLRDILDGFFPSELQRLYPDGVPFKVSDLRNQIYPEDGLGQFPGEGRVVGRQKMRKVTDRVEETSGSRMTAEQFLNRLPKCIIRQGEVIDIRGPIRDTLQNCCPMPARIQEIIVETPALASERQRSQESPDMPMPLLSMLRIKSENGEQAFLLMMWPEDTIGDVRKLLAQARDMDSAAFEILSTFPPTVYQDDTVTLQAAGLVPNATLLLRTRRALLSNPISRPGSLP.

Positions 1 to 28 (MSSPLASLSKTRKVPLESESVNPGRRGI) are disordered. The stretch at 69–147 (HDSELMASMT…IGEMERFLSD (79 aa)) forms a coiled coil. The region spanning 227–291 (LEPIPLKVYR…VSDLRNQIYP (65 aa)) is the SEP domain. The UBX domain maps to 389–466 (PMPLLSMLRI…GLVPNATLLL (78 aa)). 2 positions are modified to phosphoserine: serine 478 and serine 482.

Interacts with GNA12, GNA13, RND1, RND2 and RND3.

It localises to the cytoplasm. The protein localises to the cytoskeleton. In terms of biological role, may be involved in the reorganization of actin cytoskeleton mediated by RND1, RND2 and RND3. Promotes RHOA activation mediated by GNA12 and GNA13. The polypeptide is UBX domain-containing protein 11 (Ubxn11) (Mus musculus (Mouse)).